A 281-amino-acid chain; its full sequence is uncharacterized protein (281 aa).

Transmembrane regions (helical) follow at residues 23 to 45 (LLLSYIINLISSIIILIIGFFAA), 65 to 87 (IANFLAALVRYIIITFALIASLG), and 94 to 116 (TSVIAILGAAGMAIGLALQGSLS).

Belongs to the MscS (TC 1.A.23) family.

The protein resides in the cell membrane. This is an uncharacterized protein from Buchnera aphidicola subsp. Baizongia pistaciae (strain Bp).